The following is an 85-amino-acid chain: uncharacterized protein (85 aa).

Positions 64-76 are enriched in basic and acidic residues; sequence DPPVRRSGGREQH. The interval 64 to 85 is disordered; it reads DPPVRRSGGREQHLAQVWRATS.

This is an uncharacterized protein from Mycobacterium bovis (strain ATCC BAA-935 / AF2122/97).